The following is a 161-amino-acid chain: SUZ RNA-binding domain-containing (161 aa).

A compositionally biased stretch (acidic residues) spans 1 to 17 (MDDEEVAESWEEAADSG). Positions 1-161 (MDDEEVAESW…GTQGFHHQRR (161 aa)) are disordered. The span at 18–35 (EMERRLEEKLRISQKERL) shows a compositional bias: basic and acidic residues. One can recognise an SUZ domain in the interval 42 to 111 (RSPMRTAIVI…ARKRILGSAT (70 aa)). The span at 70 to 91 (PSSNGSLGSSALQTRPSPQVKS) shows a compositional bias: polar residues. Basic and acidic residues-rich tracts occupy residues 93 to 104 (AQREAEYAEARK) and 116 to 126 (PQERPNSDRSP). An SUZ-C domain is found at 116-160 (PQERPNSDRSPRGSSHTLSEENRPGNHVVRQPAGPDGTQGFHHQR). Phosphoserine is present on S125.

The protein belongs to the SZRD1 family.

The sequence is that of SUZ RNA-binding domain-containing (szrd1) from Danio rerio (Zebrafish).